Reading from the N-terminus, the 250-residue chain is MLKPAIIIVPGALHRPEHYQGIVSRLHKLQYEAVAVSMPSLSSSPPQPTWTEDVEAIRKAIFKFSESGQDVVLVGHSYSGILISEASKGLSRKDLPHGEGAVVRLIYMCAIAVPVGESLTGQLEPRTPQEVEAFREEGSISLLDADKVRDVLYNKCEPKVADWAISLLGKQPVTTMSTPATHAAWLEIPSTYLICEDDLAVPECVQLRMAKQGNGAFDIVRCQEGHAPCLSNPDLVVRMIRNAAGEAIEI.

Catalysis depends on charge relay system residues D198 and H226.

The protein belongs to the AB hydrolase superfamily.

It participates in secondary metabolite biosynthesis; terpenoid biosynthesis. Functionally, alpha/beta hydrolase; part of the gene cluster that mediates the biosynthesis of novofumigatonin, a heavily oxygenated meroterpenoid containing a unique orthoester moiety. The first step of the pathway is the synthesis of 3,5-dimethylorsellinic acid (DMOA) by the polyketide synthase nvfA via condensation of one acetyl-CoA starter unit with 3 malonyl-CoA units and 2 methylations. DMOA is then converted to farnesyl-DMOA by the farnesyltransferase nvfB. Epoxydation by FAD-dependent monooxygenase nvfK, followed by a protonation-initiated cyclization catalyzed by the terpene cyclase nvfL leads to the production of asnavolin H. The short chain dehydrogenase nvfC then as a 3-OH dehydrogenase of asnovolin H to yield chemesin D. There are two branches to synthesize asnovolin A from chemesin D. In one branch, chemesin D undergoes Baeyer-Villiger oxidation by nvfH, methylation by nvfJ, and enoyl reduction by the nvfM D enoylreductase that reduces the double bond between C-5'and C-6', to form respectively asnovolin I, asnovolin K, and asnovolin A. In the other branch, the methylation precedes the Baeyer-Villiger oxidation and the enoyl reduction to yield asnovolin A via the asnovolin J intermediate. Asnovolin A is further converted to fumigatonoid A by the Fe(II)/2-oxoglutarate-dependent dioxygenase nvfI that catalyzes an endoperoxidation reaction. The alpha/beta hydrolase nvfD then acts as an epimerase that converts fumigatonoid A to its C-5' epimer, which then undergoes spontaneous or nvfD-catalyzed lactonization. The following step utilizes the ketoreductase nvfG to produce fumigatonoid B. The dioxygenase nvfE further converts fumigatonoid B into fumigatonoid C. Finally the Fe(II)/2-oxoglutarate-dependent dioxygenase nvfF catalyzes two rounds of oxidation to transform fumigatonoid C into the end product, novofumigatonin A. The sequence is that of Alpha/beta hydrolase nvfD from Aspergillus novofumigatus (strain IBT 16806).